Reading from the N-terminus, the 896-residue chain is Translation initiation factor IF-2 (896 aa).

Residues 32-306 form a disordered region; the sequence is LAQAGSSDTK…HKTKKQSEEH (275 aa). Polar residues-rich tracts occupy residues 35–48 and 114–126; these read AGSSDTKNSPVSKA and ADSTEPLSNSSQE. Positions 156–170 are enriched in basic and acidic residues; sequence ARNEETPIIRTRTEP. The segment covering 213–237 has biased composition (polar residues); it reads QQTRPSVETASTKQQQPSGTNTRPA. Basic and acidic residues predominate over residues 256 to 280; the sequence is RGPDRDRTKRSDENVKAFTGRDRYG. The tr-type G domain maps to 401–570; that stretch reads IRSPIVAFMG…ALQAEVLELK (170 aa). Residues 410-417 are G1; sequence GHVDHGKT. Residue 410–417 participates in GTP binding; the sequence is GHVDHGKT. Residues 435 to 439 form a G2 region; it reads AITQH. The G3 stretch occupies residues 456–459; the sequence is DTPG. GTP-binding positions include 456 to 460 and 510 to 513; these read DTPGH and NKCD. The tract at residues 510 to 513 is G4; the sequence is NKCD. Positions 546–548 are G5; it reads SAK.

This sequence belongs to the TRAFAC class translation factor GTPase superfamily. Classic translation factor GTPase family. IF-2 subfamily.

Its subcellular location is the cytoplasm. In terms of biological role, one of the essential components for the initiation of protein synthesis. Protects formylmethionyl-tRNA from spontaneous hydrolysis and promotes its binding to the 30S ribosomal subunits. Also involved in the hydrolysis of GTP during the formation of the 70S ribosomal complex. The protein is Translation initiation factor IF-2 (infB) of Chlamydia muridarum (strain MoPn / Nigg).